We begin with the raw amino-acid sequence, 130 residues long: Small ribosomal subunit protein uS8 (130 aa).

It belongs to the universal ribosomal protein uS8 family. Part of the 30S ribosomal subunit. Contacts proteins S5 and S12.

One of the primary rRNA binding proteins, it binds directly to 16S rRNA central domain where it helps coordinate assembly of the platform of the 30S subunit. The chain is Small ribosomal subunit protein uS8 from Phytoplasma australiense.